The sequence spans 743 residues: Ovocleidin-116 (743 aa).

An N-terminal signal peptide occupies residues 1–18; the sequence is MRATLFCLCLCLLGTVLP. Cysteines 31 and 42 form a disulfide. N-linked (GlcNAc...) asparagine glycosylation occurs at Asn-62. Positions 68–225 are disordered; the sequence is KEEGDHQGTI…GTMGTGDSAI (158 aa). The segment covering 129–141 has biased composition (polar residues); sequence DSNSVYPTSTSVE. The span at 169–179 shows a compositional bias: gly residues; sequence GPHGDGDGGNG. The N-linked (GlcNAc...) asparagine; partial glycan is linked to Asn-293. 6 disordered regions span residues 333–356, 385–454, 505–534, 549–577, 628–649, and 692–743; these read GDSV…ATEI, SGKG…GPER, ARTQ…QQEV, RHRA…STGG, DPWV…TVAG, and SGVG…RQSL. Positions 402–420 are enriched in low complexity; it reads ATMTTRGGRGTASSGLTTG. Positions 421-431 are enriched in polar residues; that stretch reads DCSTAASTPSR. Residues 549–558 show a composition bias toward basic and acidic residues; sequence RHRARVRPES.

Belongs to the osteoregulin family. In terms of processing, asn-62 is fully glycosylated, whereas only less than 10% of Asn-293 seem to be glycosylated. In terms of tissue distribution, in the eggshell, expressed mainly in the palisade and mammillary layers. Expression also detected in the hypertrophic zone of the epiphyseal growth plate, and in cortical and medullary bone (at protein level). Highly expressed in uterus. Not detected in the proximal oviduct, liver, magnum, duodenum and kidney.

The protein localises to the secreted. The protein resides in the extracellular space. It is found in the extracellular matrix. In terms of biological role, major component of the eggshell matrix. May play an important role in the regulation of calcite growth during eggshell calcification. May also regulate the mineralization process in developing and growing bones. The chain is Ovocleidin-116 from Gallus gallus (Chicken).